Consider the following 932-residue polypeptide: Myelin gene regulatory factor-like A (932 aa).

2 stretches are compositionally biased toward low complexity: residues 1–19 (MDGY…QQHQ) and 33–48 (QQQQ…QQQQ). 7 disordered regions span residues 1-63 (MDGY…ISNG), 152-256 (VNSP…LSSS), 269-328 (TNTQ…NENP), 540-568 (VTPP…SNNM), 582-601 (TMNI…LSQL), 613-660 (TQNH…NNNN), and 680-726 (NINN…CHWN). Residues 49–59 (PMNGSNNQLLG) show a composition bias toward polar residues. A coiled-coil region spans residues 127–154 (LDSSFLMLQQQLQDQQQQIAQFNSSVNS). 2 stretches are compositionally biased toward low complexity: residues 152–249 (VNSP…ANNT) and 277–294 (PRSI…TNSP). Residues 286 to 546 (PNLSPTNSPI…ATQVTPPGDL (261 aa)) constitute a DNA-binding region (NDT80). The segment covering 311 to 328 (ENENSDPPSPMTQYNENP) has biased composition (polar residues). Composition is skewed to low complexity over residues 615 to 660 (NHNN…NNNN) and 680 to 721 (NINN…NNNN). Residues 767–877 (SDLRIKYDLK…KQMDEMKLKL (111 aa)) enclose the Peptidase S74 domain. Positions 863–895 (TQELSKQMDEMKLKLITYESKLKNLKKKSKNQT) form a coiled coil. Residues 895-915 (TILLIIFMITFLLVALYMYKP) traverse the membrane as a helical segment.

It is found in the membrane. Transcription factor which acts as a key regulator of pstA (prestalk-A) cells differentiation. Essential for ecmA-specific gene expression. The chain is Myelin gene regulatory factor-like A (mrfA) from Dictyostelium discoideum (Social amoeba).